A 262-amino-acid chain; its full sequence is Putative hydro-lyase BLi00500/BL02808 (262 aa).

It belongs to the D-glutamate cyclase family.

The chain is Putative hydro-lyase BLi00500/BL02808 from Bacillus licheniformis (strain ATCC 14580 / DSM 13 / JCM 2505 / CCUG 7422 / NBRC 12200 / NCIMB 9375 / NCTC 10341 / NRRL NRS-1264 / Gibson 46).